A 282-amino-acid chain; its full sequence is HTH-type transcriptional activator RhaR (282 aa).

The region spanning 179-277 (DKLITRLAAS…GMTPSQWRHL (99 aa)) is the HTH araC/xylS-type domain. 2 consecutive DNA-binding regions (H-T-H motif) follow at residues 196–217 (DKFC…RQQT) and 244–267 (ISDI…TRET).

In terms of assembly, binds DNA as a dimer.

It is found in the cytoplasm. Functionally, activates expression of the rhaSR operon in response to L-rhamnose. The sequence is that of HTH-type transcriptional activator RhaR from Escherichia coli O1:K1 / APEC.